We begin with the raw amino-acid sequence, 224 residues long: GrpE protein homolog 2, mitochondrial (224 aa).

A mitochondrion-targeting transit peptide spans 1–31 (MAARSLWAVQRLQRLLASGAMSESRGWLHPF). Position 141 is an N6-acetyllysine (Lys-141).

The protein belongs to the GrpE family. As to quaternary structure, probable component of the PAM complex at least composed of a mitochondrial HSP70 protein, GRPEL1 or GRPEL2, TIMM44, TIMM16/PAM16 and TIMM14/DNAJC19. Ubiquitous.

It localises to the mitochondrion matrix. Essential component of the PAM complex, a complex required for the translocation of transit peptide-containing proteins from the inner membrane into the mitochondrial matrix in an ATP-dependent manner. Seems to control the nucleotide-dependent binding of mitochondrial HSP70 to substrate proteins. Stimulates ATPase activity of mt-HSP70. May also serve to modulate the interconversion of oligomeric (inactive) and monomeric (active) forms of mt-HSP70. This chain is GrpE protein homolog 2, mitochondrial (Grpel2), found in Mus musculus (Mouse).